Reading from the N-terminus, the 446-residue chain is Tubulin alpha-1B chain (446 aa).

Gln11 is a binding site for GTP. Residues 34–55 (GRLMDDSPSKHDSGSTFFSETG) are disordered. Basic and acidic residues predominate over residues 35–46 (RLMDDSPSKHDS). Residues Glu69, Ser138, Gly142, Thr143, Ser177, Asn204, and Asn226 each coordinate GTP. Glu69 is a Mg(2+) binding site. Residue Glu252 is part of the active site.

It belongs to the tubulin family. Dimer of alpha and beta chains. A typical microtubule is a hollow water-filled tube with an outer diameter of 25 nm and an inner diameter of 15 nM. Alpha-beta heterodimers associate head-to-tail to form protofilaments running lengthwise along the microtubule wall with the beta-tubulin subunit facing the microtubule plus end conferring a structural polarity. Microtubules usually have 13 protofilaments but different protofilament numbers can be found in some organisms and specialized cells. Mg(2+) is required as a cofactor.

It is found in the cytoplasm. It localises to the cytoskeleton. It carries out the reaction GTP + H2O = GDP + phosphate + H(+). Tubulin is the major constituent of microtubules, a cylinder consisting of laterally associated linear protofilaments composed of alpha- and beta-tubulin heterodimers. Microtubules grow by the addition of GTP-tubulin dimers to the microtubule end, where a stabilizing cap forms. Below the cap, tubulin dimers are in GDP-bound state, owing to GTPase activity of alpha-tubulin. This Schizophyllum commune (Split gill fungus) protein is Tubulin alpha-1B chain (TUB-1B).